The primary structure comprises 448 residues: Exodeoxyribonuclease 7 large subunit (448 aa).

It belongs to the XseA family. As to quaternary structure, heterooligomer composed of large and small subunits.

It is found in the cytoplasm. The enzyme catalyses Exonucleolytic cleavage in either 5'- to 3'- or 3'- to 5'-direction to yield nucleoside 5'-phosphates.. Its function is as follows. Bidirectionally degrades single-stranded DNA into large acid-insoluble oligonucleotides, which are then degraded further into small acid-soluble oligonucleotides. In Histophilus somni (strain 129Pt) (Haemophilus somnus), this protein is Exodeoxyribonuclease 7 large subunit.